The sequence spans 300 residues: Iron-dependent extradiol dioxygenase (300 aa).

VOC domains are found at residues 5–120 (SLAY…AFHG) and 142–270 (GLGH…FGCE). Histidine 145 contacts Fe cation. Substrate is bound by residues histidine 200, histidine 215, aspartate 250, and tyrosine 256. Fe cation is bound at residue histidine 215. Fe cation is bound at residue glutamate 266.

The protein belongs to the extradiol ring-cleavage dioxygenase family. Homodimer. It depends on Fe(2+) as a cofactor.

The catalysed reaction is 3,4-dihydroxy-9,10-secoandrosta-1,3,5(10)-triene-9,17-dione + O2 = (1E,2Z)-3-hydroxy-5,9,17-trioxo-4,5:9,10-disecoandrosta-1(10),2-dien-4-oate + H(+). It functions in the pathway steroid metabolism; cholesterol metabolism. Functionally, catalyzes the meta-cleavage of 3,4-dihydroxy-9,10-seconandrost-1,3,5(10)-triene-9,17-dione (3,4-DHSA) to produce 4,5-9,10-diseco-3-hydroxy-5,9,17-trioxoandrosta-1(10),2-diene-4-oic acid (4,9-DSHA). Also involved in biphenyl and polychlorinated biphenyls (PCBs) degradation. This chain is Iron-dependent extradiol dioxygenase (hsaC), found in Rhodococcus jostii (strain RHA1).